The chain runs to 227 residues: tRNA (guanine-N(1)-)-methyltransferase (227 aa).

S-adenosyl-L-methionine is bound by residues Gly112 and 132–137 (LGDFVL).

This sequence belongs to the RNA methyltransferase TrmD family. As to quaternary structure, homodimer.

It is found in the cytoplasm. It catalyses the reaction guanosine(37) in tRNA + S-adenosyl-L-methionine = N(1)-methylguanosine(37) in tRNA + S-adenosyl-L-homocysteine + H(+). Its function is as follows. Specifically methylates guanosine-37 in various tRNAs. The protein is tRNA (guanine-N(1)-)-methyltransferase of Gloeobacter violaceus (strain ATCC 29082 / PCC 7421).